A 132-amino-acid chain; its full sequence is Holo-[acyl-carrier-protein] synthase (132 aa).

Residues Asp13 and Glu63 each coordinate Mg(2+).

This sequence belongs to the P-Pant transferase superfamily. AcpS family. Mg(2+) is required as a cofactor.

The protein localises to the cytoplasm. It catalyses the reaction apo-[ACP] + CoA = holo-[ACP] + adenosine 3',5'-bisphosphate + H(+). Functionally, transfers the 4'-phosphopantetheine moiety from coenzyme A to a Ser of acyl-carrier-protein. The sequence is that of Holo-[acyl-carrier-protein] synthase from Gloeobacter violaceus (strain ATCC 29082 / PCC 7421).